A 921-amino-acid chain; its full sequence is MASFPRFRFLAIAVVFHLVKASVDPTTRRSSSALRRPGHVALIAGLYEDVSAVTTGWKLNPVNFDSVFNRSRHTWSWGSPDILPMFEQGAVPGRVDAYTYGAELEDFSLDGFALDLWVFDHVKELFAEARTNKTLNDALRQDRIVFFLHLLGLDTTGHSFRPYSKEYLNNIKVVDKGVQEITELMKDFYADDRTAFVFTADHGMSDWGNHGDGHPDNTRTPLIAWGSGVAKPQLYPGEVAPGHDEYSSDWNLDHIRRHDVEQADVAALMAYLAGTEFPANSVGELPLSFLTAGLKEKAEASLVNAQGILEQYRVKEEGKKLTELRYRPYEPLSDEGMATESRVAHIRQLIETGSYEEAIEESAALLKVGLGGLRYLQTYDWLFLRALITIGYLGWVAYALTTVIDLHVLHGRIQPSRTLIGTIISTSALTALYASFAISKSPLTYYAYAFFPVFFWEEVYARRESLTEGRKELFGHIKSSSNFVSLVFNCAVYVGIIESLALGYIHREILTILFVIGAFWPIAYGFSFLRQHMALSITWFLSCIAMSTFTLLPPAMTTEDVNMIMLGGALMVLVGIIYLILEDFVLSDFGWSEKPSSPRNHVSRTLVGIQIGLTLLAALVTRSSALSMQANQGLPRGNQVMGWVVLVVSLLMPLAYRAKPNNHYMHRILVIFLTCAPTFVILTISYEGLFYIAFSAVLVSWVRLEHAIYKFPSSSANGAARSAPSPAKPHNLETSQTLPSPFRPLTLRDARVALFFFVLFQAAFFSTGNVASVSSFSLDSVSRLIPIFDPFSQGAMLILKLLIPFALISANLGILNKRLGVAPSALFMVVMAISDILTLYFFWVVKDEGSWLEIGSTISHFVIASLLCVFVAALEGVSAMFIAGVEVSEDVDRAVGKGAVAEVLLEKTEAERDGGAGSGGK.

Residues 37-57 form a helical membrane-spanning segment; it reads PGHVALIAGLYEDVSAVTTGW. 2 N-linked (GlcNAc...) asparagine glycosylation sites follow: N69 and N132. A run of 10 helical transmembrane segments spans residues 386–406, 418–438, 441–461, 483–503, 509–529, 533–553, 561–581, 606–626, 640–660, and 679–699; these read ALIT…VIDL, TLIG…SFAI, SPLT…EVYA, FVSL…LALG, ILTI…FSFL, MALS…TLLP, VNMI…YLIL, LVGI…SSAL, VMGW…RAKP, and FVIL…AVLV. Residues 715–737 are disordered; sequence SANGAARSAPSPAKPHNLETSQT. The next 4 membrane-spanning stretches (helical) occupy residues 752–772, 795–815, 825–845, and 862–882; these read VALF…NVAS, AMLI…LGIL, ALFM…FWVV, and VIAS…AMFI.

It belongs to the PIGG/PIGN/PIGO family. PIGN subfamily.

The protein localises to the endoplasmic reticulum membrane. Its pathway is glycolipid biosynthesis; glycosylphosphatidylinositol-anchor biosynthesis. In terms of biological role, ethanolamine phosphate transferase involved in glycosylphosphatidylinositol-anchor biosynthesis. Transfers ethanolamine phosphate to the first alpha-1,4-linked mannose of the glycosylphosphatidylinositol precursor of GPI-anchor. The chain is GPI ethanolamine phosphate transferase 1 (MCD4) from Chaetomium globosum (strain ATCC 6205 / CBS 148.51 / DSM 1962 / NBRC 6347 / NRRL 1970) (Soil fungus).